A 138-amino-acid polypeptide reads, in one-letter code: Cyclin-dependent kinase 4 inhibitor B (138 aa).

The stretch at 13-39 is one ANK 1; truncated repeat; sequence GSDEGLASAAARGLVEKVRQLLEAGAD. ANK repeat units lie at residues 46-74, 79-108, and 112-138; these read FGRR…EPNC, TLTR…RLDV, and WGRL…ATGD.

It belongs to the CDKN2 cyclin-dependent kinase inhibitor family. Heterodimer of CDKN2B with CDK4 or CDK6. Isoform 2 does not interact with CDK4 nor CDK6. In terms of tissue distribution, isoform 2 is expressed in normal (keratinocytes, fibroblasts) and tumor cell lines.

It is found in the cytoplasm. In terms of biological role, interacts strongly with CDK4 and CDK6. Potent inhibitor. Potential effector of TGF-beta induced cell cycle arrest. The chain is Cyclin-dependent kinase 4 inhibitor B (CDKN2B) from Homo sapiens (Human).